Reading from the N-terminus, the 303-residue chain is Uracil phosphoribosyltransferase (303 aa).

The interval 1 to 86 (MHIIMKTILA…RYVSSTPTDS (86 aa)) is unknown. Residues 87 to 303 (LSSKPLAAVY…DRLCGTSNPS (217 aa)) are UPRTase. Residues R170, R195, and 222 to 230 (DPMLATGGS) contribute to the 5-phospho-alpha-D-ribose 1-diphosphate site. Residues I285 and 290–292 (GDA) each bind uracil. D291 contacts 5-phospho-alpha-D-ribose 1-diphosphate.

It belongs to the UPRTase family. The cofactor is Mg(2+).

It carries out the reaction UMP + diphosphate = 5-phospho-alpha-D-ribose 1-diphosphate + uracil. The protein operates within pyrimidine metabolism; UMP biosynthesis via salvage pathway; UMP from uracil: step 1/1. With respect to regulation, allosterically activated by GTP. Functionally, catalyzes the conversion of uracil and 5-phospho-alpha-D-ribose 1-diphosphate (PRPP) to UMP and diphosphate. This Chlamydia muridarum (strain MoPn / Nigg) protein is Uracil phosphoribosyltransferase (upp).